Reading from the N-terminus, the 556-residue chain is Arginine--tRNA ligase (556 aa).

The 'HIGH' region motif lies at 132–142 (ANPTGDLHLGH).

Belongs to the class-I aminoacyl-tRNA synthetase family. Monomer.

The protein resides in the cytoplasm. It carries out the reaction tRNA(Arg) + L-arginine + ATP = L-arginyl-tRNA(Arg) + AMP + diphosphate. The chain is Arginine--tRNA ligase from Listeria monocytogenes serotype 4b (strain CLIP80459).